The primary structure comprises 98 residues: UPF0235 protein Ping_3043 (98 aa).

Belongs to the UPF0235 family.

This chain is UPF0235 protein Ping_3043, found in Psychromonas ingrahamii (strain DSM 17664 / CCUG 51855 / 37).